The sequence spans 340 residues: Guanine nucleotide-binding protein G(I)/G(S)/G(T) subunit beta-1 (340 aa).

WD repeat units lie at residues 53-83 (GHLA…IVWD), 95-125 (LRSS…SIYS), 141-170 (GHTG…ALWD), 182-212 (GHTG…KLWD), 224-254 (GHES…RLFD), 268-298 (NIIC…NVWD), and 310-340 (GHDN…KIWN).

This sequence belongs to the WD repeat G protein beta family. G proteins are composed of 3 units, alpha, beta and gamma.

Guanine nucleotide-binding proteins (G proteins) are involved as a modulator or transducer in various transmembrane signaling systems. The beta and gamma chains are required for the GTPase activity, for replacement of GDP by GTP, and for G protein-effector interaction. In Homarus americanus (American lobster), this protein is Guanine nucleotide-binding protein G(I)/G(S)/G(T) subunit beta-1 (GBETA1).